Here is a 581-residue protein sequence, read N- to C-terminus: Leucine aminopeptidase 3, chloroplastic (581 aa).

The transit peptide at 1 to 50 directs the protein to the chloroplast; it reads MAVTLVTSCASSSRFHFRSFSSSPSSLSSCFVRFQLLSRLRVSFAITPLY. Residues Lys350 and Asp355 each coordinate Mn(2+). Lys362 is a catalytic residue. Residues Asp375, Asp435, and Glu437 each coordinate Mn(2+). Arg439 is a catalytic residue.

This sequence belongs to the peptidase M17 family. As to quaternary structure, homohexamer (dimer of homotrimers). It depends on Mn(2+) as a cofactor.

Its subcellular location is the plastid. It localises to the chloroplast. It catalyses the reaction Release of an N-terminal amino acid, Xaa-|-Yaa-, in which Xaa is preferably Leu, but may be other amino acids including Pro although not Arg or Lys, and Yaa may be Pro. Amino acid amides and methyl esters are also readily hydrolyzed, but rates on arylamides are exceedingly low.. The catalysed reaction is Release of N-terminal proline from a peptide.. In terms of biological role, presumably involved in the processing and regular turnover of intracellular proteins. Catalyzes the removal of unsubstituted N-terminal amino acids from various peptides. Possesses Cys-Gly dipeptidase activity. This chain is Leucine aminopeptidase 3, chloroplastic, found in Arabidopsis thaliana (Mouse-ear cress).